Here is a 676-residue protein sequence, read N- to C-terminus: DNA ligase (676 aa).

NAD(+) is bound by residues 35–39 (DAEYD), 84–85 (SL), and E118. The active-site N6-AMP-lysine intermediate is the K120. NAD(+) is bound by residues R141, E176, K284, and K308. Residues C402, C405, C420, and C426 each coordinate Zn(2+). Positions 595–676 (SYLSLIHGKI…WLQYTQSSEN (82 aa)) constitute a BRCT domain.

This sequence belongs to the NAD-dependent DNA ligase family. LigA subfamily. The cofactor is Mg(2+). Mn(2+) serves as cofactor.

The catalysed reaction is NAD(+) + (deoxyribonucleotide)n-3'-hydroxyl + 5'-phospho-(deoxyribonucleotide)m = (deoxyribonucleotide)n+m + AMP + beta-nicotinamide D-nucleotide.. Functionally, DNA ligase that catalyzes the formation of phosphodiester linkages between 5'-phosphoryl and 3'-hydroxyl groups in double-stranded DNA using NAD as a coenzyme and as the energy source for the reaction. It is essential for DNA replication and repair of damaged DNA. This Ehrlichia chaffeensis (strain ATCC CRL-10679 / Arkansas) protein is DNA ligase.